Reading from the N-terminus, the 506-residue chain is Probable cytochrome P450 309a1 (506 aa).

3 positions are modified to phosphothreonine: Thr75, Thr78, and Thr81. A heme-binding site is contributed by Cys452.

It belongs to the cytochrome P450 family. Heme is required as a cofactor.

It localises to the endoplasmic reticulum membrane. The protein localises to the microsome membrane. Functionally, may be involved in the metabolism of insect hormones and in the breakdown of synthetic insecticides. The polypeptide is Probable cytochrome P450 309a1 (Cyp309a1) (Drosophila melanogaster (Fruit fly)).